The sequence spans 141 residues: Large ribosomal subunit protein uL11 (141 aa).

This sequence belongs to the universal ribosomal protein uL11 family. Part of the ribosomal stalk of the 50S ribosomal subunit. Interacts with L10 and the large rRNA to form the base of the stalk. L10 forms an elongated spine to which L12 dimers bind in a sequential fashion forming a multimeric L10(L12)X complex. Post-translationally, one or more lysine residues are methylated.

Forms part of the ribosomal stalk which helps the ribosome interact with GTP-bound translation factors. The protein is Large ribosomal subunit protein uL11 of Crocosphaera subtropica (strain ATCC 51142 / BH68) (Cyanothece sp. (strain ATCC 51142)).